A 122-amino-acid chain; its full sequence is Large ribosomal subunit protein uL14 (122 aa).

The protein belongs to the universal ribosomal protein uL14 family. In terms of assembly, part of the 50S ribosomal subunit. Forms a cluster with proteins L3 and L19. In the 70S ribosome, L14 and L19 interact and together make contacts with the 16S rRNA in bridges B5 and B8.

Binds to 23S rRNA. Forms part of two intersubunit bridges in the 70S ribosome. The polypeptide is Large ribosomal subunit protein uL14 (Geobacter sulfurreducens (strain ATCC 51573 / DSM 12127 / PCA)).